The primary structure comprises 301 residues: Putative S-adenosyl-L-methionine-dependent methyltransferase MAP_3777 (301 aa).

Residues Asp-126 and 155–156 contribute to the S-adenosyl-L-methionine site; that span reads DL.

It belongs to the UPF0677 family.

Exhibits S-adenosyl-L-methionine-dependent methyltransferase activity. The protein is Putative S-adenosyl-L-methionine-dependent methyltransferase MAP_3777 of Mycolicibacterium paratuberculosis (strain ATCC BAA-968 / K-10) (Mycobacterium paratuberculosis).